Here is a 382-residue protein sequence, read N- to C-terminus: D-galactonate dehydratase (382 aa).

Aspartate 183 serves as a coordination point for Mg(2+). Histidine 185 acts as the Proton donor in catalysis. Mg(2+) is bound by residues glutamate 209 and glutamate 235. The Proton acceptor role is filled by histidine 285.

It belongs to the mandelate racemase/muconate lactonizing enzyme family. GalD subfamily. The cofactor is Mg(2+).

The catalysed reaction is D-galactonate = 2-dehydro-3-deoxy-D-galactonate + H2O. The protein operates within carbohydrate acid metabolism; D-galactonate degradation; D-glyceraldehyde 3-phosphate and pyruvate from D-galactonate: step 1/3. Functionally, catalyzes the dehydration of D-galactonate to 2-keto-3-deoxy-D-galactonate. The polypeptide is D-galactonate dehydratase (Ralstonia nicotianae (strain ATCC BAA-1114 / GMI1000) (Ralstonia solanacearum)).